A 941-amino-acid chain; its full sequence is DNA mismatch repair protein MutS (941 aa).

613–620 lines the ATP pocket; sequence GPNMAGKS.

This sequence belongs to the DNA mismatch repair MutS family.

This protein is involved in the repair of mismatches in DNA. It is possible that it carries out the mismatch recognition step. This protein has a weak ATPase activity. The chain is DNA mismatch repair protein MutS from Clostridium botulinum (strain Alaska E43 / Type E3).